Consider the following 126-residue polypeptide: UPF0102 protein BH12350 (126 aa).

The protein belongs to the UPF0102 family.

The protein is UPF0102 protein BH12350 of Bartonella henselae (strain ATCC 49882 / DSM 28221 / CCUG 30454 / Houston 1) (Rochalimaea henselae).